A 376-amino-acid polypeptide reads, in one-letter code: uncharacterized protein (376 aa).

This sequence belongs to the mimivirus L17x/L18x family.

This is an uncharacterized protein from Acanthamoeba polyphaga (Amoeba).